The sequence spans 299 residues: ATP phosphoribosyltransferase (299 aa).

Belongs to the ATP phosphoribosyltransferase family. Long subfamily. As to quaternary structure, equilibrium between an active dimeric form, an inactive hexameric form and higher aggregates. Interconversion between the various forms is largely reversible and is influenced by the natural substrates and inhibitors of the enzyme. The cofactor is Mg(2+).

Its subcellular location is the cytoplasm. It carries out the reaction 1-(5-phospho-beta-D-ribosyl)-ATP + diphosphate = 5-phospho-alpha-D-ribose 1-diphosphate + ATP. It participates in amino-acid biosynthesis; L-histidine biosynthesis; L-histidine from 5-phospho-alpha-D-ribose 1-diphosphate: step 1/9. Feedback inhibited by histidine. Catalyzes the condensation of ATP and 5-phosphoribose 1-diphosphate to form N'-(5'-phosphoribosyl)-ATP (PR-ATP). Has a crucial role in the pathway because the rate of histidine biosynthesis seems to be controlled primarily by regulation of HisG enzymatic activity. The protein is ATP phosphoribosyltransferase of Buchnera aphidicola subsp. Baizongia pistaciae (strain Bp).